Here is a 648-residue protein sequence, read N- to C-terminus: ATP-dependent DNA helicase Q1 (648 aa).

Positions 100–275 (INVTMARKDI…QKILCVGKCL (176 aa)) constitute a Helicase ATP-binding domain. 113 to 120 (MPTGGGKS) contacts ATP. A DEVH box motif is present at residues 219-222 (DEVH). One can recognise a Helicase C-terminal domain in the interval 299–451 (DFTEDIVKLI…EMVSYCQNVS (153 aa)). The Zn(2+) site is built by cysteine 453, cysteine 471, cysteine 475, and cysteine 478. N6-acetyllysine is present on residues lysine 514 and lysine 522. Serine 597 carries the phosphoserine modification. The interval 601–648 (ALSEARQVEQVDSKGEEQSSGNSQKSKSRLQPSGSKNAGAKKRKLDDA) is disordered. Positions 606 to 617 (RQVEQVDSKGEE) are enriched in basic and acidic residues. Residues 618-636 (QSSGNSQKSKSRLQPSGSK) are compositionally biased toward polar residues. Serine 633 bears the Phosphoserine mark. Basic residues predominate over residues 639 to 648 (GAKKRKLDDA).

It belongs to the helicase family. RecQ subfamily. As to quaternary structure, may form homodimers or higher order oligomers. Interacts with EXO1. Interacts with MLH1. Interacts with PARP1. Mg(2+) serves as cofactor. Requires Mn(2+) as cofactor. The cofactor is Zn(2+). Expressed in all tissues examined. In terms of tissue distribution, only expressed in spermatocytes. Expression increases at pachytene (17 days old) and decreases after completion of meiosis II (7 weeks old).

It is found in the nucleus. The enzyme catalyses Couples ATP hydrolysis with the unwinding of duplex DNA by translocating in the 3'-5' direction.. The catalysed reaction is ATP + H2O = ADP + phosphate + H(+). It catalyses the reaction dATP + H2O = dADP + phosphate + H(+). DNA helicase that plays a role in DNA damage repair and genome stability. Exhibits a magnesium- and ATP-dependent DNA-helicase activity that unwinds single- and double-stranded DNA in a 3'-5' direction. Plays a role in restoring regressed replication forks. Required to restart stalled replication forks induced by abortive topoisomerase 1 and 2 lesions. May play a role in the repair of DNA that is damaged by ultraviolet light or other mutagens. In Mus musculus (Mouse), this protein is ATP-dependent DNA helicase Q1 (Recql).